We begin with the raw amino-acid sequence, 400 residues long: Chalcone synthase C2 (400 aa).

Residue C168 is part of the active site.

Belongs to the thiolase-like superfamily. Chalcone/stilbene synthases family.

It carries out the reaction (E)-4-coumaroyl-CoA + 3 malonyl-CoA + 3 H(+) = 2',4,4',6'-tetrahydroxychalcone + 3 CO2 + 4 CoA. Its pathway is secondary metabolite biosynthesis; flavonoid biosynthesis. The primary product of this enzyme is 4,2',4',6'-tetrahydroxychalcone (also termed naringenin-chalcone or chalcone) which can under specific conditions spontaneously isomerize into naringenin. The protein is Chalcone synthase C2 (C2) of Zea mays (Maize).